The chain runs to 307 residues: Aspartate carbamoyltransferase catalytic subunit (307 aa).

Carbamoyl phosphate contacts are provided by R59 and T60. K87 is an L-aspartate binding site. Positions 109, 139, and 142 each coordinate carbamoyl phosphate. L-aspartate-binding residues include R172 and R224. Residues A265 and P266 each coordinate carbamoyl phosphate.

The protein belongs to the aspartate/ornithine carbamoyltransferase superfamily. ATCase family. Heterododecamer (2C3:3R2) of six catalytic PyrB chains organized as two trimers (C3), and six regulatory PyrI chains organized as three dimers (R2).

It carries out the reaction carbamoyl phosphate + L-aspartate = N-carbamoyl-L-aspartate + phosphate + H(+). It participates in pyrimidine metabolism; UMP biosynthesis via de novo pathway; (S)-dihydroorotate from bicarbonate: step 2/3. Functionally, catalyzes the condensation of carbamoyl phosphate and aspartate to form carbamoyl aspartate and inorganic phosphate, the committed step in the de novo pyrimidine nucleotide biosynthesis pathway. The polypeptide is Aspartate carbamoyltransferase catalytic subunit (Streptococcus agalactiae serotype Ia (strain ATCC 27591 / A909 / CDC SS700)).